Here is a 408-residue protein sequence, read N- to C-terminus: Sprouty-related, EVH1 domain-containing protein 3 (408 aa).

The WH1 domain occupies 1-113 (MVRVRAVVMA…KSLLAALAAL (113 aa)). The interval 118–226 (LTPSSSSSSS…YEDYRRSGPP (109 aa)) is disordered. Residues 120 to 130 (PSSSSSSSSPS) show a composition bias toward low complexity. The KBD domain maps to 192–242 (LPFTGIPEPSESLAGAGSQGWGSRGYEDYRRSGPPPPPLALSTCVVRFAKT). The residue at position 238 (Arg-238) is an Asymmetric dimethylarginine. At Arg-246 the chain carries Omega-N-methylarginine. A disordered region spans residues 256-286 (LPAPLTEAAPPAPPARPPPGPGPTPAPAKAS). A compositionally biased stretch (pro residues) spans 265-281 (PPAPPARPPPGPGPTPA). The region spanning 294–405 (RCVHCRALFR…CAGCGGRHEE (112 aa)) is the SPR domain.

As to quaternary structure, interacts with palmitoyltransferase ZDHHC17/HIP14; the interaction leads to palmitoylation of SPRED3. Post-translationally, phosphorylated on tyrosine. In terms of processing, palmitoylated by ZDHHC17/HIP14. Ubiquitinated. Brain specific.

The protein resides in the cell membrane. Tyrosine kinase substrate that inhibits growth-factor-mediated activation of MAP kinase. Inhibits fibroblast growth factor (FGF)-induced retinal lens fiber differentiation, probably by inhibiting FGF-mediated phosphorylation of ERK1/2. Inhibits TGFB-induced epithelial-to-mesenchymal transition in lens epithelial cells. This is Sprouty-related, EVH1 domain-containing protein 3 (Spred3) from Mus musculus (Mouse).